A 552-amino-acid chain; its full sequence is Phosphoglucomutase (552 aa).

Residue serine 143 is the Phosphoserine intermediate of the active site. Residues serine 143, aspartate 295, aspartate 297, and aspartate 299 each contribute to the Mg(2+) site.

Belongs to the phosphohexose mutase family. Mg(2+) serves as cofactor.

It catalyses the reaction alpha-D-glucose 1-phosphate = alpha-D-glucose 6-phosphate. Its pathway is glycolipid metabolism; diglucosyl-diacylglycerol biosynthesis. Catalyzes the interconversion between glucose-6-phosphate and alpha-glucose-1-phosphate. This is the first step in the biosynthesis of diglucosyl-diacylglycerol (Glc2-DAG), i.e. the predominant glycolipid found in the S.aureus membrane, which is also used as a membrane anchor for lipoteichoic acid (LTA). The polypeptide is Phosphoglucomutase (pgcA) (Staphylococcus aureus (strain bovine RF122 / ET3-1)).